The chain runs to 103 residues: Enhancer of rudimentary homolog (103 aa).

This sequence belongs to the E(R) family. As to quaternary structure, homodimer.

Its function is as follows. May have a role in the cell cycle. The protein is Enhancer of rudimentary homolog of Aedes aegypti (Yellowfever mosquito).